The chain runs to 347 residues: Lipopolysaccharide core heptosyltransferase OpsX (347 aa).

This sequence belongs to the glycosyltransferase 9 family.

It participates in bacterial outer membrane biogenesis; LPS core biosynthesis. Functionally, catalyzes heptose transfer to the lipopolysaccharide core. It transfers the first L-glycero-D-manno-heptose to the phosphorylated 3-deoxy-alpha-D-manno-octulosonic acid (Kdo-P) of the inner core. In Haemophilus influenzae (strain ATCC 51907 / DSM 11121 / KW20 / Rd), this protein is Lipopolysaccharide core heptosyltransferase OpsX.